Reading from the N-terminus, the 264-residue chain is Putative HTH-type transcriptional regulator TrmBL2 (264 aa).

Positions 33-54 (LTPAELASVSEVPAPRTYDVLR) form a DNA-binding region, H-T-H motif.

Belongs to the transcriptional regulator TrmB family.

Its function is as follows. Binds to the maltodextrin transport gene cluster (mdxE operon) promoter and to some other TGM (Thermococcales-Glycolytic-Motif) sequences, but not exclusively. In Pyrococcus furiosus (strain ATCC 43587 / DSM 3638 / JCM 8422 / Vc1), this protein is Putative HTH-type transcriptional regulator TrmBL2 (trmBL2).